Consider the following 532-residue polypeptide: 3-hydroxy-3-methylglutaryl-coenzyme A reductase 1 (532 aa).

The chain crosses the membrane as a helical span at residues 63-83 (FATVVYLVSLFAHPDAPATTT). The interval 77–117 (DAPATTTGDDDDGQGGSRRARPAAAEPAPMHGHGGGMMEAD) is linker. Positions 78–111 (APATTTGDDDDGQGGSRRARPAAAEPAPMHGHGG) are disordered. Low complexity predominate over residues 98 to 107 (PAAAEPAPMH). Residues 118–532 (DEEIVAAVAS…SSKDVAKAAS (415 aa)) are catalytic. The active-site Charge relay system is Glu211. Asn275 is a glycosylation site (N-linked (GlcNAc...) asparagine). Active-site charge relay system residues include Lys343 and Asp419. His517 serves as the catalytic Proton donor. The N-linked (GlcNAc...) asparagine glycan is linked to Asn521.

It belongs to the HMG-CoA reductase family.

The protein localises to the endoplasmic reticulum membrane. The enzyme catalyses (R)-mevalonate + 2 NADP(+) + CoA = (3S)-3-hydroxy-3-methylglutaryl-CoA + 2 NADPH + 2 H(+). The protein operates within metabolic intermediate biosynthesis; (R)-mevalonate biosynthesis; (R)-mevalonate from acetyl-CoA: step 3/3. Its function is as follows. Catalyzes the synthesis of mevalonate. The specific precursor of all isoprenoid compounds present in plants. This chain is 3-hydroxy-3-methylglutaryl-coenzyme A reductase 1 (HMG1), found in Oryza sativa subsp. japonica (Rice).